The following is a 331-amino-acid chain: MAKLFYDSDADLGLLQDKTVAIIGYGSQGHAHALNLKDSGIKVVVGLYEGSRSASKAKSDGLEVLSVAEASERADWIMILLPDEFQKDVYSKEIAPHLKAGKILSFAHGFNIRFELIKPPEFVDVVMIAPKGPGHTVRWEYQNGQGVPALFAIEQDASGNARALAMAYAKGIGGTRAGILETNFKEETETDLFGEQAVLCGGLSELVKAGFETLVEAGYQPELAYFECLHEVKLIVDLMVKGGLTAMRDSISNTAEYGDYVSGPRLITKETKEEMKNILADIQDGTFAKNFVKECDAGKPEMKRIRQKDSELPIEKVGKTLRSMFSWLKSD.

Residues 2–182 (AKLFYDSDAD…GGTRAGILET (181 aa)) enclose the KARI N-terminal Rossmann domain. NADP(+) is bound by residues 25 to 28 (YGSQ), Ser-51, Ser-53, and 83 to 86 (DEFQ). His-108 is a catalytic residue. NADP(+) is bound at residue Gly-134. A KARI C-terminal knotted domain is found at 183-328 (NFKEETETDL…KTLRSMFSWL (146 aa)). Asp-191, Glu-195, Glu-227, and Glu-231 together coordinate Mg(2+). Residue Ser-252 participates in substrate binding.

It belongs to the ketol-acid reductoisomerase family. Mg(2+) is required as a cofactor.

The catalysed reaction is (2R)-2,3-dihydroxy-3-methylbutanoate + NADP(+) = (2S)-2-acetolactate + NADPH + H(+). The enzyme catalyses (2R,3R)-2,3-dihydroxy-3-methylpentanoate + NADP(+) = (S)-2-ethyl-2-hydroxy-3-oxobutanoate + NADPH + H(+). The protein operates within amino-acid biosynthesis; L-isoleucine biosynthesis; L-isoleucine from 2-oxobutanoate: step 2/4. It functions in the pathway amino-acid biosynthesis; L-valine biosynthesis; L-valine from pyruvate: step 2/4. In terms of biological role, involved in the biosynthesis of branched-chain amino acids (BCAA). Catalyzes an alkyl-migration followed by a ketol-acid reduction of (S)-2-acetolactate (S2AL) to yield (R)-2,3-dihydroxy-isovalerate. In the isomerase reaction, S2AL is rearranged via a Mg-dependent methyl migration to produce 3-hydroxy-3-methyl-2-ketobutyrate (HMKB). In the reductase reaction, this 2-ketoacid undergoes a metal-dependent reduction by NADPH to yield (R)-2,3-dihydroxy-isovalerate. The protein is Ketol-acid reductoisomerase (NADP(+)) of Prochlorococcus marinus (strain NATL1A).